Consider the following 239-residue polypeptide: Adapter protein MecA (239 aa).

Residues 118-128 (EQRTKEKEAQG) are compositionally biased toward basic and acidic residues. Residues 118 to 137 (EQRTKEKEAQGSKRQKSSAR) are disordered.

It belongs to the MecA family. As to quaternary structure, homodimer.

In terms of biological role, enables the recognition and targeting of unfolded and aggregated proteins to the ClpC protease or to other proteins involved in proteolysis. The sequence is that of Adapter protein MecA from Staphylococcus aureus (strain JH1).